The chain runs to 323 residues: 8-oxo-dGDP phosphatase NUDT18 (323 aa).

Residues 37 to 167 enclose the Nudix hydrolase domain; that stretch reads RLRKNVCYVV…DVLHLVELGA (131 aa). Position 58 (Leu-58) interacts with Mg(2+). Positions 76-97 match the Nudix box motif; sequence GRMEPGETIVEAMQREVKEEAG.

It belongs to the Nudix hydrolase family. Mn(2+) serves as cofactor. Requires Mg(2+) as cofactor.

The catalysed reaction is 8-oxo-dGDP + H2O = 8-oxo-dGMP + phosphate + H(+). The enzyme catalyses 8-oxo-dADP + H2O = 8-oxo-dAMP + phosphate + H(+). It carries out the reaction 2-oxo-dADP + H2O = 2-oxo-dAMP + phosphate + H(+). It catalyses the reaction 8-oxo-GDP + H2O = 8-oxo-GMP + phosphate + H(+). Functionally, mediates the hydrolysis of oxidized nucleoside diphosphate derivatives. Hydrolyzes 8-oxo-7,8-dihydroguanine (8-oxo-Gua)-containing deoxyribo- and ribonucleoside diphosphates to the monophosphates. Hydrolyzes 8-oxo-dGDP and 8-oxo-GDP with the same efficiencies. Also hydrolyzes 8-OH-dADP and 2-OH-dADP. Exhibited no or minimal hydrolysis activity against 8-oxo-dGTP, 8-oxo-GTP, dGTP, GTP, dGDP and GDP. Probably removes oxidized guanine nucleotides from both the DNA and RNA precursor pools. This Mus musculus (Mouse) protein is 8-oxo-dGDP phosphatase NUDT18.